The sequence spans 246 residues: MDGTDMTEQPVYKRVLLKVSGEALMGSREYGLDKAMVQTIASDIADVVAFGVEVCLVIGGGNIFRGVSAAASGMDRAQGDYIGMLATVMNALAMQAALEKLNVPTRVQSAIPMASVCEPYVRRRAQRHMEKGRVVIFAAGTGNPFFTTDTAAALRAAEMGCNVLLKGTQVDGVYAADPRKNPDAERYNELTYLDVLSRDLSVMDAAAISLCRENHLPIIVFNIHETGAFGRVIRGEGRFTRIVETQ.

18-21 (KVSG) contributes to the ATP binding site. Gly60 provides a ligand contact to UMP. ATP contacts are provided by Gly61 and Arg65. Residues Asp80 and 141-148 (TGNPFFTT) each bind UMP. Residues Thr168, Gln169, Tyr174, and Asp177 each contribute to the ATP site.

Belongs to the UMP kinase family. In terms of assembly, homohexamer.

The protein localises to the cytoplasm. It carries out the reaction UMP + ATP = UDP + ADP. Its pathway is pyrimidine metabolism; CTP biosynthesis via de novo pathway; UDP from UMP (UMPK route): step 1/1. With respect to regulation, inhibited by UTP. Catalyzes the reversible phosphorylation of UMP to UDP. The chain is Uridylate kinase from Granulibacter bethesdensis (strain ATCC BAA-1260 / CGDNIH1).